The following is a 331-amino-acid chain: Probable allantoicase (331 aa).

It belongs to the allantoicase family.

The enzyme catalyses allantoate + H2O = (S)-ureidoglycolate + urea. The protein operates within nitrogen metabolism; (S)-allantoin degradation; (S)-ureidoglycolate from allantoate (aminidohydrolase route): step 1/1. This is Probable allantoicase from Pseudomonas savastanoi pv. phaseolicola (strain 1448A / Race 6) (Pseudomonas syringae pv. phaseolicola (strain 1448A / Race 6)).